A 305-amino-acid polypeptide reads, in one-letter code: Tyrosine recombinase XerC (305 aa).

Residues 1-94 enclose the Core-binding (CB) domain; that stretch reads MSSVDEFLTY…ACRSYYAWLL (94 aa). The Tyr recombinase domain occupies 115-292; sequence KLPQVLDADE…DFQHLAKVYD (178 aa). Residues arginine 154, lysine 178, histidine 244, arginine 247, and histidine 270 contribute to the active site. Tyrosine 279 functions as the O-(3'-phospho-DNA)-tyrosine intermediate in the catalytic mechanism.

Belongs to the 'phage' integrase family. XerC subfamily. Forms a cyclic heterotetrameric complex composed of two molecules of XerC and two molecules of XerD.

The protein resides in the cytoplasm. In terms of biological role, site-specific tyrosine recombinase, which acts by catalyzing the cutting and rejoining of the recombining DNA molecules. The XerC-XerD complex is essential to convert dimers of the bacterial chromosome into monomers to permit their segregation at cell division. It also contributes to the segregational stability of plasmids. In Xanthomonas axonopodis pv. citri (strain 306), this protein is Tyrosine recombinase XerC.